Reading from the N-terminus, the 90-residue chain is Antitoxin epsilon 1 (90 aa).

This sequence belongs to the epsilon antitoxin family. In the presence of the zeta toxin, forms an inactive PezA(2)PezT(2) heterotetramer.

Its function is as follows. Antitoxin component of a type II toxin-antitoxin (TA) system. Neutralizes the toxic effect of zeta toxin. Part of a postsegregational killing (PSK) system involved in the killing of plasmid-free cells. Continuous synthesis of the epsilon antitoxin is required to counteract the zeta toxin. The protein is Antitoxin epsilon 1 of Enterococcus faecalis (Streptococcus faecalis).